The chain runs to 176 residues: Adipose-secreted signaling protein (176 aa).

The segment at 1-30 is disordered; that stretch reads MATAGKGSKGKGTGVRFTPEGTQGHPQEGT. The span at 20–30 shows a compositional bias: polar residues; it reads EGTQGHPQEGT.

It belongs to the ADISSP family.

May be involved in thermogenesis and glucose homeostasis. This chain is Adipose-secreted signaling protein, found in Taeniopygia guttata (Zebra finch).